A 68-amino-acid chain; its full sequence is Beta-defensin 1 (68 aa).

A signal peptide spans 1–21 (MRTSYLLLFILCLVLCDMDSG). The propeptide occupies 22–32 (DTFLTGLGHRS). Intrachain disulfides connect Cys-37–Cys-66, Cys-44–Cys-59, and Cys-49–Cys-67.

It belongs to the beta-defensin family. As to quaternary structure, monomer. Homodimer.

It is found in the secreted. Its subcellular location is the membrane. Has bactericidal activity. May act as a ligand for C-C chemokine receptor CCR6. Positively regulates the sperm motility and bactericidal activity in a CCR6-dependent manner. Binds to CCR6 and triggers Ca2+ mobilization in the sperm which is important for its motility. This chain is Beta-defensin 1 (DEFB1), found in Saguinus oedipus (Cotton-top tamarin).